The chain runs to 346 residues: Putative alpha/beta hydrolase R526 (346 aa).

Belongs to the AB hydrolase 3 family.

The protein localises to the virion. The protein is Putative alpha/beta hydrolase R526 of Acanthamoeba polyphaga mimivirus (APMV).